Reading from the N-terminus, the 739-residue chain is DNA ligase (739 aa).

Residues 1 to 29 are disordered; the sequence is MTANRPALPTRDKAVSDLSATEASDEHAA. NAD(+) contacts are provided by residues 51 to 55, 100 to 101, and Glu-134; these read DADYD and SL. Lys-136 (N6-AMP-lysine intermediate) is an active-site residue. The NAD(+) site is built by Arg-157, Glu-194, Lys-311, and Lys-335. Residues Cys-440, Cys-443, Cys-464, and Cys-470 each contribute to the Zn(2+) site. Positions 592–612 are disordered; sequence PTEMEEASEETPPTRRRKPQG. One can recognise a BRCT domain in the interval 662–739; that stretch reads ASTSPVSGKT…TEDEWFDLVG (78 aa).

The protein belongs to the NAD-dependent DNA ligase family. LigA subfamily. It depends on Mg(2+) as a cofactor. The cofactor is Mn(2+).

The catalysed reaction is NAD(+) + (deoxyribonucleotide)n-3'-hydroxyl + 5'-phospho-(deoxyribonucleotide)m = (deoxyribonucleotide)n+m + AMP + beta-nicotinamide D-nucleotide.. DNA ligase that catalyzes the formation of phosphodiester linkages between 5'-phosphoryl and 3'-hydroxyl groups in double-stranded DNA using NAD as a coenzyme and as the energy source for the reaction. It is essential for DNA replication and repair of damaged DNA. The chain is DNA ligase from Azorhizobium caulinodans (strain ATCC 43989 / DSM 5975 / JCM 20966 / LMG 6465 / NBRC 14845 / NCIMB 13405 / ORS 571).